We begin with the raw amino-acid sequence, 207 residues long: Adenylyl-sulfate kinase (207 aa).

39–46 (GLSGAGKS) contributes to the ATP binding site. The active-site Phosphoserine intermediate is Ser-113.

The protein belongs to the APS kinase family.

The enzyme catalyses adenosine 5'-phosphosulfate + ATP = 3'-phosphoadenylyl sulfate + ADP + H(+). It participates in sulfur metabolism; hydrogen sulfide biosynthesis; sulfite from sulfate: step 2/3. Catalyzes the synthesis of activated sulfate. This is Adenylyl-sulfate kinase from Vibrio vulnificus (strain CMCP6).